The sequence spans 363 residues: MASAVVSMVSTTASRFALLKVDSSSDSDSEKARGTHTSGKAHSGSAARGKTNVNEKKKEKRRKKKEQQQSEANELRNLAFKKIPPKASLGVSAAVQEHITHTVPKDAQKEDWQQWQQRDKQLTSDMFEADLEKALILSKLEYEESKVNGDGVNGVPQSKKVNKKDKRKNNQGKDKPLTVPLKDFQLEDQQAKKQEELKSPALPQGSGFFNKVEDDVTKIILNEKRKEHSTDVTESFATPEYSTEPALKDGKTEVLKQEIEKKEIALQQMRSKISQWEAKYREVKARNSQLLKMLQEGEMKDKAEILLQVDELLSIKNELTLQVTTLHAALEQERSKVKVLQAEQVRYQGGKKSKRNPELEHGR.

2 disordered regions span residues 17-79 and 147-182; these read ALLK…RNLA and VNGD…VPLK. Residues 50–79 adopt a coiled-coil conformation; the sequence is KTNVNEKKKEKRRKKKEQQQSEANELRNLA. Positions 160 to 170 are enriched in basic residues; sequence KVNKKDKRKNN. Coiled-coil stretches lie at residues 249 to 298 and 328 to 348; these read DGKT…QEGE and AALE…VRYQ.

It belongs to the GKAP1 family.

Its subcellular location is the golgi apparatus. Functionally, may play a role in the regulation of insulin-dependent IRS1 tyrosine phosphorylation in adipocytes. The protein is G kinase-anchoring protein 1-B (gkap1-b) of Xenopus laevis (African clawed frog).